The primary structure comprises 643 residues: uncharacterized protein (643 aa).

Residues 179 to 199 are compositionally biased toward low complexity; it reads FKSSQLQQSPSPNKKSPSYSQ. Disordered stretches follow at residues 179 to 200 and 349 to 377; these read FKSS…YSQV and KRSN…STEN.

This is an uncharacterized protein from Caenorhabditis elegans.